Here is a 122-residue protein sequence, read N- to C-terminus: RING-box protein 1B (122 aa).

A compositionally biased stretch (acidic residues) spans 1–23; the sequence is MAEEIEVEETEDFHDMDFNDEEP. The tract at residues 1-28 is disordered; sequence MAEEIEVEETEDFHDMDFNDEEPSCSGG. Zn(2+) is bound by residues Cys57, Cys60, Cys68, Cys71, Cys82, Cys89, His91, His94, His96, Cys108, and Asp111. The RING-type zinc finger occupies 57-112; the sequence is CAICRNHIMNLCIECQADPNANQDECTVAWGECNHAFHYHCIARWLKTRLVCPLDN.

The protein belongs to the RING-box family. As to quaternary structure, part of a SCF complex consisting of Skpa (SKP1), Cul1, Roc1B and a F-box protein. In terms of tissue distribution, highly expressed in early embryos, and in pupae. Widely expressed in adult males, while it is weakly expressed in adult females.

The protein localises to the cytoplasm. Its subcellular location is the nucleus. The protein operates within protein modification; protein ubiquitination. Functionally, component of the SCF (SKP1-CUL1-F-box protein) E3 ubiquitin ligase complex, which mediates the ubiquitination and subsequent proteasomal degradation of target proteins. Through the RING-type zinc finger, seems to recruit the E2 ubiquitination enzyme to the complex and brings it into close proximity to the substrate. This is RING-box protein 1B (Roc1b) from Drosophila melanogaster (Fruit fly).